A 386-amino-acid polypeptide reads, in one-letter code: Cytochrome b (386 aa).

Transmembrane regions (helical) follow at residues 32–52 (LGSLLGLCLVIQIASGIFLAM), 76–98 (YLIRYIHANGASFFFVCMYAHIG), 113–133 (VWVIGVVIFIITMATAFLGYC), and 179–199 (FFALHYLCPFILAALVIMHLM). Positions 82 and 96 each coordinate heme b. Residues H183 and H197 each coordinate heme b. H202 is an a ubiquinone binding site. 4 consecutive transmembrane segments (helical) span residues 225-245 (FVFKDLVTVFVFLLIFSLFVF), 289-309 (LGGVIAMFAAILILLVLPVTD), 321-341 (ISKTFFFLFLYNFILLGQLGQ), and 348-368 (FIQLGQFATLNYFLYFIFIVP).

Belongs to the cytochrome b family. As to quaternary structure, fungal cytochrome b-c1 complex contains 10 subunits; 3 respiratory subunits, 2 core proteins and 5 low-molecular weight proteins. Cytochrome b-c1 complex is a homodimer. Heme b serves as cofactor.

It localises to the mitochondrion inner membrane. In terms of biological role, component of the ubiquinol-cytochrome c reductase complex (complex III or cytochrome b-c1 complex) that is part of the mitochondrial respiratory chain. The b-c1 complex mediates electron transfer from ubiquinol to cytochrome c. Contributes to the generation of a proton gradient across the mitochondrial membrane that is then used for ATP synthesis. This is Cytochrome b (COB) from Wickerhamomyces canadensis (Yeast).